Here is a 645-residue protein sequence, read N- to C-terminus: Rho GTPase-activating protein 25 (645 aa).

The PH domain maps to 46-151 (RPIKMGWLKK…WVKFLRRVAG (106 aa)). One can recognise a Rho-GAP domain in the interval 159–353 (QRLDETVAYE…MMIRDHEVLF (195 aa)). Disordered regions lie at residues 355–444 (KSKD…QTLP) and 469–550 (FWSP…EEEI). Phosphoserine occurs at positions 362 and 395. Positions 393–409 (TDSFSSMTSDSDTTSPT) are enriched in low complexity. Phosphothreonine is present on Thr406. Residues 420 to 431 (DSSKVPREKPGD) show a composition bias toward basic and acidic residues. Residues 487–504 (SQDLRQLSDSQRTSTYDN) are compositionally biased toward polar residues. At Ser536 the chain carries Phosphoserine. Positions 541-644 (GKKNSGEEEI…VKSMKEPKTE (104 aa)) form a coiled coil.

Its function is as follows. GTPase activator for the Rho-type GTPases by converting them to an inactive GDP-bound state. The protein is Rho GTPase-activating protein 25 (ARHGAP25) of Homo sapiens (Human).